The following is a 382-amino-acid chain: O-antigen polymerase (382 aa).

Residues 1 to 3 lie on the Cytoplasmic side of the membrane; that stretch reads MNN. Residues 4–22 form a helical membrane-spanning segment; that stretch reads INKIFITFLCIELIIGGGG. Residues 23-34 are Periplasmic-facing; it reads RLLEPLGIFPLR. The helical transmembrane segment at 35–54 threads the bilayer; it reads YLLFVFSFILLIFNLVTFNF. Topologically, residues 55–62 are cytoplasmic; that stretch reads SITQKCVS. Residues 63–81 traverse the membrane as a helical segment; it reads LFIWLLLFPFYGFFVGLLA. At 82–94 the chain is on the periplasmic side; sequence GNKINDILFDVQP. The chain crosses the membrane as a helical span at residues 95-112; the sequence is YLFMLSLIYLFTLRYTLK. Topologically, residues 113-125 are cytoplasmic; it reads VFSCEIFIKIVNA. Residues 126-146 form a helical membrane-spanning segment; sequence FALYGSLLYISYIILLNFGLL. Residues 147–167 lie on the Periplasmic side of the membrane; sequence NFNLIYEHLSLTSEFFFRPDG. A helical membrane pass occupies residues 168-187; it reads AFFSKSFYFFGVGAIISFVD. The Cytoplasmic segment spans residues 188–189; sequence KK. A helical transmembrane segment spans residues 190–206; sequence YLKCLIIVLAILLTESR. At 207–208 the chain is on the periplasmic side; that stretch reads GV. The helical transmembrane segment at 209–226 threads the bilayer; sequence LLFTTLSLLLASFKLHKL. Topologically, residues 227-229 are cytoplasmic; that stretch reads YLN. The helical transmembrane segment at 230–247 threads the bilayer; it reads TIIIILGSVLFIIMLYMV. Residues 248–300 are Periplasmic-facing; sequence GSRSEDSDSVRFNDLYFYYKNVDLATFLFGRGFGSFILDRLRIEIVPLEILQK. Residues 301 to 318 form a helical membrane-spanning segment; it reads TGVIGVFISLVPMLLIFL. Residues 319-329 lie on the Cytoplasmic side of the membrane; it reads KGYFLNSTKTS. A helical transmembrane segment spans residues 330-349; sequence LMMSLILFFSITVSITNPFL. Topologically, residues 350 to 352 are periplasmic; it reads FTP. The helical transmembrane segment at 353-370 threads the bilayer; it reads MGIFIIGVVVLWVFSIEN. Residues 371 to 382 are Cytoplasmic-facing; that stretch reads IQISNNLTSGAK.

The protein resides in the cell inner membrane. The enzyme catalyses n lipid-linked O-antigen repeat units = a lipid-linked O antigen + (n-1) polyisoprenyl diphosphate.. It functions in the pathway bacterial outer membrane biogenesis; LPS O-antigen biosynthesis. Polymerase involved in the biosynthesis of the lipopolysaccharide (LPS). Catalyzes the polymerization of the O-antigen repeat units on the periplasmic face of the inner membrane, leading to the formation of the lipid-linked O-antigen molecule. This is O-antigen polymerase from Shigella flexneri.